We begin with the raw amino-acid sequence, 310 residues long: MESTQQMVSSIINTSFEAAVVAATSTLELMGIQYDYNEVFTRVKSKFDYVMDDSGVKNNLLGKAITIDQALNGKFGSAIRNRNWMTDSKTVAKLDEDVNKLRMTLSSKGIDQKMRVLNACFSVKRIPGKSSSIIKCTRLMKDKIERGEVEVDDSYVDEKMEIDTIDWKSRYDQLEKRFEALKQRVNEKYNTWVQKAKKVNENMYSLQNVISQQQNQIADLQQYCNKLEADLQGKFSSLVSSVEWYLRSMELPDDVKNDIEQQLNSIDLINPINAIDDIESLIRNLIQDYDRTFLMLKGLLKQCNYEYACE.

Positions 1-146 are RNA-binding; sequence MESTQQMVSS…TRLMKDKIER (146 aa). The interval 147–203 is dimerization; that stretch reads GEVEVDDSYVDEKMEIDTIDWKSRYDQLEKRFEALKQRVNEKYNTWVQKAKKVNENM. Positions 163–234 form a coiled coil; it reads DTIDWKSRYD…NKLEADLQGK (72 aa). The tract at residues 167–231 is interaction with host ZC3H7B; it reads WKSRYDQLEK…QYCNKLEADL (65 aa). Residues 205 to 310 form an interaction with host EIF4G1 region; sequence SLQNVISQQQ…KQCNYEYACE (106 aa).

The protein belongs to the rotavirus NSP3 family. In terms of assembly, homodimer. Interacts (via the coiled-coil region) with host ZC3H7B (via LD motif). Interacts with host EIF4G1.

The protein localises to the host cytoplasm. Functionally, plays an important role in stimulating the translation of viral mRNAs. These mRNAs are capped but not polyadenylated, instead terminating in a conserved sequence 'GACC' at the 3' that is recognized by NSP3, which competes with host PABPC1 for EIF4G1 binding. The interaction between NSP3 and host EIF4G1 stabilizes the EIF4E-EIF4G1 interaction, thereby facilitating the initiation of capped mRNA translation. The polypeptide is Non-structural protein 3 (Homo sapiens (Human)).